A 136-amino-acid polypeptide reads, in one-letter code: Sec-independent protein translocase protein TatB (136 aa).

Residues Met1 to Gly21 traverse the membrane as a helical segment. The interval Tyr89–Ser136 is disordered. Residues Thr99–Pro115 are compositionally biased toward polar residues. The span at Ser122–Ser136 shows a compositional bias: basic and acidic residues.

It belongs to the TatB family. As to quaternary structure, the Tat system comprises two distinct complexes: a TatABC complex, containing multiple copies of TatA, TatB and TatC subunits, and a separate TatA complex, containing only TatA subunits. Substrates initially bind to the TatABC complex, which probably triggers association of the separate TatA complex to form the active translocon.

Its subcellular location is the cell inner membrane. Its function is as follows. Part of the twin-arginine translocation (Tat) system that transports large folded proteins containing a characteristic twin-arginine motif in their signal peptide across membranes. Together with TatC, TatB is part of a receptor directly interacting with Tat signal peptides. TatB may form an oligomeric binding site that transiently accommodates folded Tat precursor proteins before their translocation. This is Sec-independent protein translocase protein TatB from Hahella chejuensis (strain KCTC 2396).